We begin with the raw amino-acid sequence, 208 residues long: Small ribosomal subunit protein uS4 (208 aa).

The region spanning 98-159 (RRLDNVAYRL…KSRKVAAISE (62 aa)) is the S4 RNA-binding domain.

The protein belongs to the universal ribosomal protein uS4 family. As to quaternary structure, part of the 30S ribosomal subunit. Contacts protein S5. The interaction surface between S4 and S5 is involved in control of translational fidelity.

Its function is as follows. One of the primary rRNA binding proteins, it binds directly to 16S rRNA where it nucleates assembly of the body of the 30S subunit. With S5 and S12 plays an important role in translational accuracy. The sequence is that of Small ribosomal subunit protein uS4 from Geobacter sp. (strain M21).